Consider the following 256-residue polypeptide: Floral homeotic protein APETALA 1 (256 aa).

The 61-residue stretch at 1 to 61 (MGRGRVQLKR…GKLFEYSTDS (61 aa)) folds into the MADS-box domain. The region spanning 88–178 (NTNWSMEYNR…SKQIKEREKV (91 aa)) is the K-box domain. Positions 180–206 (RAQQEQWDQQNHGQNMPPPPPPQEHQI) are disordered.

As to quaternary structure, homodimer capable of binding to CArG-box sequences.

The protein localises to the nucleus. In terms of biological role, transcription factor that promotes early floral meristem identity in synergy with LEAFY. Displays a redundant function with CAULIFLOWER in the up-regulation of LEAFY. Required subsequently for the transition of an inflorescence meristem into a floral meristem, and for the normal development of sepals and petals in flowers. Regulates positively B class homeotic proteins. In Brassica rapa subsp. pekinensis (Chinese cabbage), this protein is Floral homeotic protein APETALA 1 (AP1).